A 127-amino-acid chain; its full sequence is uncharacterized protein (127 aa).

Disordered regions lie at residues methionine 1–glycine 22 and leucine 53–lysine 106. The segment covering proline 76–glutamine 95 has biased composition (basic and acidic residues).

It localises to the mitochondrion. This is an uncharacterized protein from Arabidopsis thaliana (Mouse-ear cress).